A 66-amino-acid polypeptide reads, in one-letter code: Large ribosomal subunit protein bL31 (66 aa).

Zn(2+) is bound by residues Cys-16, Cys-18, Cys-36, and Cys-39.

The protein belongs to the bacterial ribosomal protein bL31 family. Type A subfamily. As to quaternary structure, part of the 50S ribosomal subunit. It depends on Zn(2+) as a cofactor.

Functionally, binds the 23S rRNA. This Campylobacter curvus (strain 525.92) protein is Large ribosomal subunit protein bL31.